The sequence spans 183 residues: Negative modulator of initiation of replication (183 aa).

A disordered region spans residues 43–70 (VNDTQPVSAPAPSKAAPSAGNESRPQDR). The span at 50–61 (SAPAPSKAAPSA) shows a compositional bias: low complexity. Interaction with DNA regions lie at residues 89-90 (AV), 118-122 (RTRIY), and 152-158 (NTNTGRK).

Belongs to the SeqA family. In terms of assembly, homodimer. Polymerizes to form helical filaments.

It is found in the cytoplasm. Functionally, negative regulator of replication initiation, which contributes to regulation of DNA replication and ensures that replication initiation occurs exactly once per chromosome per cell cycle. Binds to pairs of hemimethylated GATC sequences in the oriC region, thus preventing assembly of replication proteins and re-initiation at newly replicated origins. Repression is relieved when the region becomes fully methylated. The protein is Negative modulator of initiation of replication of Pantoea ananatis (strain AJ13355).